The chain runs to 879 residues: Nuclear autoantigen Sp-100 (879 aa).

Ala2 carries the post-translational modification N-acetylalanine. Position 18 is a phosphoserine (Ser18). The region spanning 33 to 149 is the HSR domain; sequence DLQRMFTEDQ…IYKGFENVIH (117 aa). The segment at 154–245 is disordered; sequence LQESEEEERE…EQCAQKAEPT (92 aa). Ser157 carries the phosphoserine modification. Residues 165–168 carry the D-box; recognition signal for CDC20-mediated degradation motif; sequence RSGL. Phosphoserine is present on residues Ser171, Ser180, and Ser228. A compositionally biased stretch (polar residues) spans 176–200; that stretch reads TGENSFRSLTWPPSGSPSHAGTTPP. Residues 207–228 show a composition bias toward basic and acidic residues; that stretch reads HPCETEQINAKRKDTTSDKDDS. The segment covering 229-238 has biased composition (polar residues); the sequence is LGSQQTNEQC. Lys241 is covalently cross-linked (Glycyl lysine isopeptide (Lys-Gly) (interchain with G-Cter in SUMO2)). Positions 284 to 297 match the PxVxL motif motif; it reads IQINSCSVRLVDIK. A Glycyl lysine isopeptide (Lys-Gly) (interchain with G-Cter in SUMO) cross-link involves residue Lys297. Residues Lys300 and Lys306 each participate in a glycyl lysine isopeptide (Lys-Gly) (interchain with G-Cter in SUMO2) cross-link. Phosphoserine occurs at positions 331 and 362. The segment at 333–478 is sufficient to mediate interaction with ETS1; the sequence is GSTDVDEPLE…SSSLRRGSGS (146 aa). Residues 345–386 form a disordered region; the sequence is ISAPRSEPVINNDNPLESNDEKEGQEATCSRPQIVPEPMDFR. Glycyl lysine isopeptide (Lys-Gly) (interchain with G-Cter in SUMO2) cross-links involve residues Lys366 and Lys387. Phosphoserine occurs at positions 394, 407, 409, 410, and 451. Residues 401 to 596 form a disordered region; the sequence is GQDHDFSESS…KRGPRIPKDE (196 aa). The span at 466 to 482 shows a compositional bias: polar residues; it reads ETCSSSLRRGSGSQPQE. Residues 530-591 are compositionally biased toward basic residues; it reads SGKRRKKRRH…LKRRRKRGPR (62 aa). Short sequence motifs (nuclear localization signal) lie at residues 536-553 and 568-592; these read KRRH…RKKD and KRWQ…GPRI. Residue Lys594 forms a Glycyl lysine isopeptide (Lys-Gly) (interchain with G-Cter in SUMO2) linkage. An SAND domain is found at 595-676; it reads DENINFKQSE…KVLMENKFLP (82 aa). 2 DNA-binding regions (HMG box) span residues 677–753 and 769–837; these read EPPS…KTYI and PKRP…AAYR. Residues 717–734 carry the Nuclear localization signal motif; the sequence is KKCSETWKTIFAKEKGKF. The segment at 835–879 is disordered; sequence AYRAKGKPNSAKKRVVKAEKSKKKKEEEEDEEDEQEEENEEDDDK. The span at 838 to 857 shows a compositional bias: basic residues; it reads AKGKPNSAKKRVVKAEKSKK. The segment covering 861-879 has biased composition (acidic residues); that stretch reads EEEDEEDEQEEENEEDDDK.

Homodimer; isoforms are able to heterodimerize. Interacts with members of the HP1 family of nonhistone chromosomal protein, such as CBX5 and CBX3 via the PxVxL motif. Interacts with ETS1; the interaction is direct and modulates ETS1 transcriptional activity. Interacts with the MRN complex which is composed of two heterodimers RAD50/MRE11 associated with a single NBN; recruits the complex to PML-related bodies. Interacts with HIPK2; positively regulates TP53-dependent transcription. Interacts with CASP8AP2; may negatively regulate CASP8AP2 export from the nucleus to the cytoplasm. Interacts with SUMO1P1/SUMO5. As to quaternary structure, (Microbial infection) Interacts with Epstein-Barr virus EBNA-LP; this interaction is important for EBNA-LP coactivator activity. In terms of assembly, (Microbial infection) Interacts with human cytomegalovirus/HHV-5 protein UL123; may play a role in infection by the virus. In terms of processing, sumoylated. Sumoylation depends on a functional nuclear localization signal but is not necessary for nuclear import or nuclear body targeting. Sumoylated. Sumoylated with SUMO1. Sumoylation depends on a functional nuclear localization signal but is not necessary for nuclear import or nuclear body targeting. Sumoylation may stabilize the interaction with CBX5. Post-translationally, (Microbial infection) Immediate early protein IE1 of human cytomegalovirus (HHV-5) interferes with the sumoylation of SP100. In terms of tissue distribution, widely expressed. Sp100-B is expressed only in spleen, tonsil, thymus, mature B-cell line and some T-cell line, but not in brain, liver, muscle or non-lymphoid cell lines.

The protein localises to the nucleus. It localises to the PML body. Its subcellular location is the nuclear body. The protein resides in the cytoplasm. In terms of biological role, together with PML, this tumor suppressor is a major constituent of the PML bodies, a subnuclear organelle involved in a large number of physiological processes including cell growth, differentiation and apoptosis. Functions as a transcriptional coactivator of ETS1 and ETS2 according to PubMed:11909962. Under certain conditions, it may also act as a corepressor of ETS1 preventing its binding to DNA according to PubMed:15247905. Through the regulation of ETS1 it may play a role in angiogenesis, controlling endothelial cell motility and invasion. Through interaction with the MRN complex it may be involved in the regulation of telomeres lengthening. May also regulate TP53-mediated transcription and through CASP8AP2, regulate FAS-mediated apoptosis. Also plays a role in infection by viruses, including human cytomegalovirus and Epstein-Barr virus, through mechanisms that may involve chromatin and/or transcriptional regulation. The chain is Nuclear autoantigen Sp-100 (SP100) from Homo sapiens (Human).